The following is an 89-amino-acid chain: Mitochondrial import inner membrane translocase subunit Tim9 (89 aa).

A2 is subject to N-acetylalanine. The short motif at 28 to 52 is the Twin CX3C motif element; that stretch reads CFLDCVKDFTTREVKPEEVTCSEHC. Intrachain disulfides connect C28–C52 and C32–C48.

The protein belongs to the small Tim family. As to quaternary structure, heterohexamer; composed of 3 copies of TIMM9 and 3 copies of TIMM10/TIM10A, named soluble 70 kDa complex. The complex forms a 6-bladed alpha-propeller structure and associates with the TIMM22 component of the TIM22 complex. Interacts with multi-pass transmembrane proteins in transit. Also forms a complex composed of TIMM9, TIMM10/TIM10A and FXC1/TIM10B.

It is found in the mitochondrion inner membrane. Functionally, mitochondrial intermembrane chaperone that participates in the import and insertion of multi-pass transmembrane proteins into the mitochondrial inner membrane. May also be required for the transfer of beta-barrel precursors from the TOM complex to the sorting and assembly machinery (SAM complex) of the outer membrane. Acts as a chaperone-like protein that protects the hydrophobic precursors from aggregation and guide them through the mitochondrial intermembrane space. In Mus musculus (Mouse), this protein is Mitochondrial import inner membrane translocase subunit Tim9 (Timm9).